Here is a 252-residue protein sequence, read N- to C-terminus: Protein Flattop homolog (252 aa).

The segment at 177-252 is disordered; the sequence is TEKRRRKRTI…EKERKAAKGH (76 aa). Residues 218–252 show a composition bias toward basic and acidic residues; the sequence is PKDKPKDKPKDKEAGKKDKTKDKGKEKERKAAKGH.

Belongs to the Flattop family.

This Drosophila melanogaster (Fruit fly) protein is Protein Flattop homolog.